We begin with the raw amino-acid sequence, 224 residues long: Biosynthetic peptidoglycan transglycosylase (224 aa).

Residues 12–32 form a helical membrane-spanning segment; the sequence is ILVVLAILPVFLLLVYSLPFV.

Belongs to the glycosyltransferase 51 family.

The protein resides in the cell inner membrane. It carries out the reaction [GlcNAc-(1-&gt;4)-Mur2Ac(oyl-L-Ala-gamma-D-Glu-L-Lys-D-Ala-D-Ala)](n)-di-trans,octa-cis-undecaprenyl diphosphate + beta-D-GlcNAc-(1-&gt;4)-Mur2Ac(oyl-L-Ala-gamma-D-Glu-L-Lys-D-Ala-D-Ala)-di-trans,octa-cis-undecaprenyl diphosphate = [GlcNAc-(1-&gt;4)-Mur2Ac(oyl-L-Ala-gamma-D-Glu-L-Lys-D-Ala-D-Ala)](n+1)-di-trans,octa-cis-undecaprenyl diphosphate + di-trans,octa-cis-undecaprenyl diphosphate + H(+). The protein operates within cell wall biogenesis; peptidoglycan biosynthesis. Its function is as follows. Peptidoglycan polymerase that catalyzes glycan chain elongation from lipid-linked precursors. In Brucella suis biovar 1 (strain 1330), this protein is Biosynthetic peptidoglycan transglycosylase.